The chain runs to 138 residues: Putative nickel-responsive regulator (138 aa).

The Ni(2+) site is built by His78, His89, His91, and Cys97.

Belongs to the transcriptional regulatory CopG/NikR family. It depends on Ni(2+) as a cofactor.

Functionally, transcriptional regulator. This is Putative nickel-responsive regulator from Pyrococcus abyssi (strain GE5 / Orsay).